Consider the following 71-residue polypeptide: Large ribosomal subunit protein bL31 (71 aa).

Zn(2+)-binding residues include Cys-16, Cys-18, Cys-38, and Cys-41.

This sequence belongs to the bacterial ribosomal protein bL31 family. Type A subfamily. As to quaternary structure, part of the 50S ribosomal subunit. Zn(2+) serves as cofactor.

In terms of biological role, binds the 23S rRNA. This chain is Large ribosomal subunit protein bL31, found in Neisseria meningitidis serogroup A / serotype 4A (strain DSM 15465 / Z2491).